The following is a 683-amino-acid chain: U4/U6 small nuclear ribonucleoprotein Prp3 (683 aa).

A PWI domain is found at 1–87 (MALSKRELDE…HSKSSSDRSR (87 aa)). Residues 73-107 (GRSSRHSKSSSDRSRKRELKEVFGDDSEISKESSG) show a composition bias toward basic and acidic residues. A disordered region spans residues 73–135 (GRSSRHSKSS…IPGPPSESPG (63 aa)). Lys-139 participates in a covalent cross-link: Glycyl lysine isopeptide (Lys-Gly) (interchain with G-Cter in SUMO2). A disordered region spans residues 153–183 (IEERKKQLSFISPPTPQPKTPSSSQPERLPI). Ser-164 carries the post-translational modification Phosphoserine. A Phosphothreonine modification is found at Thr-167. Glycyl lysine isopeptide (Lys-Gly) (interchain with G-Cter in SUMO2) cross-links involve residues Lys-244 and Lys-252. The tract at residues 416-550 (NLVEHPAQLN…VHISVYRVRN (135 aa)) is mediates interaction with SART3. Ser-619 is subject to Phosphoserine.

As to quaternary structure, component of the precatalytic spliceosome (spliceosome B complex). Component of the U4/U6-U5 tri-snRNP complex, a building block of the precatalytic spliceosome (spliceosome B complex). The U4/U6-U5 tri-snRNP complex is composed of the U4, U6 and U5 snRNAs and at least PRPF3, PRPF4, PRPF6, PRPF8, PRPF31, SNRNP200, TXNL4A, SNRNP40, SNRPB, SNRPD1, SNRPD2, SNRPD3, SNRPE, SNRPF, SNRPG, DDX23, CD2BP2, PPIH, SNU13, EFTUD2, SART1 and USP39, plus LSM2, LSM3, LSM4, LSM5, LSM6, LSM7 and LSM8. Interacts directly with PRPF4. Part of a heteromeric complex containing PPIH, PRPF3 and PRPF4 that is stable in the absence of RNA. Interacts with SART3; the interaction is direct and recruits the deubiquitinase USP4 to PRPF3. Interacts with PRPF19. Interacts ('Lys-63'-linked polyubiquitinated) with PRPF8 (via the MPN (JAB/Mov34) domain); may stabilize the U4/U6-U5 tri-snRNP complex. Interacts with ERCC6. Post-translationally, ubiquitinated. Undergoes 'Lys-63'-linked polyubiquitination by PRPF19 and deubiquitination by USP4. 'Lys-63'-linked ubiquitination increases the affinity for PRPF8 and may regulate the assembly of the U4/U6-U5 tri-snRNP complex.

The protein localises to the nucleus. It localises to the nucleus speckle. Functionally, plays a role in pre-mRNA splicing as component of the U4/U6-U5 tri-snRNP complex that is involved in spliceosome assembly, and as component of the precatalytic spliceosome (spliceosome B complex). This Pongo abelii (Sumatran orangutan) protein is U4/U6 small nuclear ribonucleoprotein Prp3 (PRPF3).